A 128-amino-acid chain; its full sequence is Sirohydrochlorin cobaltochelatase (128 aa).

Histidine 9 (proton acceptor) is an active-site residue. Residue histidine 9 participates in Co(2+) binding. Residues lysine 43 and 68 to 73 (FATGTH) contribute to the substrate site. Residue histidine 73 participates in Co(2+) binding.

This sequence belongs to the CbiX family. CbiXS subfamily. Homotetramer; dimer of dimers.

The enzyme catalyses Co-sirohydrochlorin + 2 H(+) = sirohydrochlorin + Co(2+). It participates in cofactor biosynthesis; adenosylcobalamin biosynthesis; cob(II)yrinate a,c-diamide from sirohydrochlorin (anaerobic route): step 1/10. In terms of biological role, catalyzes the insertion of Co(2+) into sirohydrochlorin as part of the anaerobic pathway to cobalamin biosynthesis. This is Sirohydrochlorin cobaltochelatase from Saccharolobus solfataricus (strain ATCC 35092 / DSM 1617 / JCM 11322 / P2) (Sulfolobus solfataricus).